The sequence spans 71 residues: Large ribosomal subunit protein bL31 (71 aa).

Positions 16, 18, 37, and 40 each coordinate Zn(2+).

The protein belongs to the bacterial ribosomal protein bL31 family. Type A subfamily. In terms of assembly, part of the 50S ribosomal subunit. Zn(2+) serves as cofactor.

Binds the 23S rRNA. The polypeptide is Large ribosomal subunit protein bL31 (Nitratidesulfovibrio vulgaris (strain ATCC 29579 / DSM 644 / CCUG 34227 / NCIMB 8303 / VKM B-1760 / Hildenborough) (Desulfovibrio vulgaris)).